Here is a 483-residue protein sequence, read N- to C-terminus: Acetyltransferase AOL_s00215g273 (483 aa).

8 consecutive transmembrane segments (helical) span residues 9-29 (ALIG…TSFV), 33-53 (IYPL…TEGL), 141-161 (VAYI…LYTC), 191-211 (IFQM…SVLV), 292-312 (FLVF…VYYG), 334-354 (VTGY…FICW), 372-392 (WFVG…VLWI), and 453-473 (LGGY…GSGF).

The protein belongs to the wax synthase family.

It localises to the membrane. The protein operates within secondary metabolite biosynthesis; terpenoid biosynthesis. Its function is as follows. Acetyltransferase; part of the gene cluster that mediates the biosynthesis of sesquiterpenyl epoxy-cyclohexenoids (SECs) such as anthrobotrisins and arthrosporols, metabolites that possess a novel hybrid carbon skeleton consisting of a polyketide-derived epoxycyclohexenol combined with a terpenoid-derived monocyclic sesquiterpenol substructure (PKS-PTS hybrid). The SEC pathway plays an important role for fungal soil colonization via decreasing fungal nematode-capturing ability. The role of the acetyltransferase in SEC biosynthesis has still to be determined. The pathway begins with the biosynthesis of 6-methylsalicylic acid (6-MSA), the first precursor of the polyketide-derived epoxycyclohexenol in arthrosporols, by the polyketide synthase (PKS) AOL_s00215g283 via condensation of 1 acetate and 3 malonate units. The 6-methylsalicylic acid decarboxylase AOL_s00215g281 then catalyzes the decarboxylation of 6-methylsalicylic acid to yield m-cresol. The cytochrome P450 monooxygenase AOL_s00215g282 further oxidizes m-cresol to yield toluquinol. With the assistance of the oxidoreductase AOL_s00215g277, the polyprenyl transferase AOL_s00215g276 catalyzes the farnesylation of toluquinol to produce farnesyl hydroquinone, the hybrid precursor for biosynthesis of SECs. Farnesyl hydroquinone undergoes epoxidation and then subsequent dehydrogenation to form farnesyl epoxy-quinone, the first and simplest SEC. The cytochrome P450 monooxygenase AOL_s00215g278 and the FAD-dependent monooxygenase AOL_s00215g279 might be involved in the oxygenation of the phenol moiety, most likely in the epoxy formation. The cytochrome P450 monooxygenases AOL_s00215g274 and AOL_s00215g280 are involved in specific regional ketone reductions at respectively C-4 and C-1 of farnesyl epoxy-quinone PubMed:33823587. The protein is Acetyltransferase AOL_s00215g273 of Arthrobotrys oligospora (strain ATCC 24927 / CBS 115.81 / DSM 1491) (Nematode-trapping fungus).